A 102-amino-acid polypeptide reads, in one-letter code: uncharacterized protein (102 aa).

The segment at 79–102 is disordered; sequence AELLHPSPAPMPPATHGRSAAPCS.

This is an uncharacterized protein from Homo sapiens (Human).